The following is a 234-amino-acid chain: Bradykinin-releasing enzyme KR-E-1 (234 aa).

One can recognise a Peptidase S1 domain in the interval valine 1 to alanine 225. 6 disulfides stabilise this stretch: cysteine 7-cysteine 139, cysteine 26-cysteine 42, cysteine 74-cysteine 232, cysteine 118-cysteine 186, cysteine 150-cysteine 165, and cysteine 176-cysteine 201. N-linked (GlcNAc...) asparagine glycosylation occurs at asparagine 20. Residues histidine 41 and aspartate 86 each act as charge relay system in the active site. Serine 180 acts as the Charge relay system in catalysis.

It belongs to the peptidase S1 family. Snake venom subfamily. In terms of assembly, monomer. Expressed by the venom gland.

The protein resides in the secreted. In terms of biological role, bradykinin-releasing enzyme. Releases bradykinin from bovine HMW kininogen. Has anticoagulant activity. Increases permeability of capillaries by intradermal injection into rabbits. The polypeptide is Bradykinin-releasing enzyme KR-E-1 (Gloydius ussuriensis (Ussuri mamushi)).